The chain runs to 331 residues: MRCWSPCSLLVVIVIYCLSSHTSEAFDLAQACVESQRLSLLPICDTIFAVQQEGVQQSADDGMRSKRFIRFGRALSGDAFLRFGKNVPDLPFEDKRFLRFGRAAPQLDELLKQALQRVESLQKADETSVRRKRSTDAAPQNNAENPEQKNDSAKITKRYIDDVEDSDVKRFMRFGKRFMRFGRNPSDVGNKLTEKRFMRFGRDPEKRFMRFGKSDDKRFMRFGRNPSDAEDELEEDKRFMRFGRGGEDDEEEAEKRFMRFGRDPEKKFMRFGKSGEDKRFMRFGRNPDEQEADKRFMRFGRGGEDDEVSTEDKRFMRFGRSADKCKGCLEG.

Residues 1–25 (MRCWSPCSLLVVIVIYCLSSHTSEA) form the signal peptide. Residues 26–65 (FDLAQACVESQRLSLLPICDTIFAVQQEGVQQSADDGMRS) constitute a propeptide that is removed on maturation. F71 and F83 each carry phenylalanine amide. Residues 86 to 94 (NVPDLPFED) constitute a propeptide that is removed on maturation. F100 is modified (phenylalanine amide). Residues 103–168 (AAPQLDELLK…YIDDVEDSDV (66 aa)) constitute a propeptide that is removed on maturation. Positions 122 to 158 (QKADETSVRRKRSTDAAPQNNAENPEQKNDSAKITKR) are disordered. The segment covering 146–158 (PEQKNDSAKITKR) has biased composition (basic and acidic residues). Phenylalanine amide occurs at positions 174 and 181. Residues 184–194 (NPSDVGNKLTE) constitute a propeptide that is removed on maturation. Position 200 is a phenylalanine amide (F200). Residues 203–205 (DPE) constitute a propeptide that is removed on maturation. Phenylalanine amide is present on F211. The propeptide occupies 214-216 (SDD). F222 carries the post-translational modification Phenylalanine amide. A propeptide spanning residues 225 to 236 (NPSDAEDELEED) is cleaved from the precursor. Position 242 is a phenylalanine amide (F242). Positions 245-254 (GGEDDEEEAE) are excised as a propeptide. A Phenylalanine amide modification is found at F260. The propeptide occupies 263–265 (DPE). F271 is modified (phenylalanine amide). Positions 274-277 (SGED) are excised as a propeptide. Over residues 279–296 (RFMRFGRNPDEQEADKRF) the composition is skewed to basic and acidic residues. Residues 279 to 310 (RFMRFGRNPDEQEADKRFMRFGRGGEDDEVST) form a disordered region. F283 carries the phenylalanine amide modification. A propeptide spanning residues 286–293 (NPDEQEAD) is cleaved from the precursor. At F299 the chain carries Phenylalanine amide. The propeptide occupies 302-312 (GGEDDEVSTED). F318 is subject to Phenylalanine amide. The propeptide occupies 321 to 331 (SADKCKGCLEG).

Belongs to the FARP (FMRFamide related peptide) family.

It is found in the secreted. Excitatory neurotransmitters that directly modulate chromatophore function by activating chromatophore expansion at the chromatophore neuromuscular junction. The polypeptide is FMRFamide-related neuropeptides (Doryteuthis opalescens (California market squid)).